Reading from the N-terminus, the 132-residue chain is Small ribosomal subunit protein uS8 (132 aa).

It belongs to the universal ribosomal protein uS8 family. Part of the 30S ribosomal subunit. Contacts proteins S5 and S12.

Functionally, one of the primary rRNA binding proteins, it binds directly to 16S rRNA central domain where it helps coordinate assembly of the platform of the 30S subunit. This chain is Small ribosomal subunit protein uS8, found in Arthrobacter sp. (strain FB24).